The following is a 113-amino-acid chain: Hydrogenase maturation factor HypA (113 aa).

Histidine 2 contacts Ni(2+). The Zn(2+) site is built by cysteine 73, cysteine 76, cysteine 89, and cysteine 92.

The protein belongs to the HypA/HybF family.

In terms of biological role, involved in the maturation of [NiFe] hydrogenases. Required for nickel insertion into the metal center of the hydrogenase. The chain is Hydrogenase maturation factor HypA from Cereibacter sphaeroides (strain KD131 / KCTC 12085) (Rhodobacter sphaeroides).